A 265-amino-acid chain; its full sequence is Mlc titration factor A (265 aa).

His-111, His-148, His-152, and Glu-211 together coordinate Zn(2+).

The protein belongs to the MtfA family. In terms of assembly, interacts with Mlc with high affinity. It depends on Zn(2+) as a cofactor.

It is found in the cytoplasm. Its activity is regulated as follows. Proteolytic activity is stimulated by interaction with Mlc. Addition of the chelators EDTA or phenanthroline significantly reduces the peptidase activity, whereas the addition of other protease inhibitors has much less effect. Functionally, involved in the modulation of the activity of the glucose-phosphotransferase system (glucose-PTS). Interacts with the transcriptional repressor Mlc, preventing its interaction with DNA and leading to the modulation of expression of genes regulated by Mlc, including ptsG, which encodes the PTS system glucose-specific EIICB component. Shows zinc-dependent metallopeptidase activity. In vitro, can cleave several artificial substrates. The greatest activity and specificity is observed for L-alanine fused to 4-nitroanilide (L-alanine-pNA). Shows significantly lower activity towards L-arginine-pNA, L-proline-pNA, hippuryl-L-phenylalanine and hippuryl-L-arginine, and cannot use FTC-casein. Mlc does not appear to be a biologically relevant peptidase substrate. Biologically relevant targets may have a function in growth transition under changing environmental conditions. This is Mlc titration factor A from Escherichia coli (strain K12).